Reading from the N-terminus, the 301-residue chain is Protoheme IX farnesyltransferase (301 aa).

8 helical membrane-spanning segments follow: residues 30 to 50 (VISL…PKAI), 55 to 75 (IIVS…GGMI), 106 to 126 (AYAI…LANP), 127 to 147 (LTAL…SIWL), 152 to 172 (WWNI…GFAA), 177 to 197 (FTLL…GHFW), 233 to 253 (ALMV…YLIV), and 281 to 301 (FKLS…VKLI).

This sequence belongs to the UbiA prenyltransferase family. Protoheme IX farnesyltransferase subfamily.

It localises to the cell membrane. The enzyme catalyses heme b + (2E,6E)-farnesyl diphosphate + H2O = Fe(II)-heme o + diphosphate. It functions in the pathway porphyrin-containing compound metabolism; heme O biosynthesis; heme O from protoheme: step 1/1. Functionally, converts heme B (protoheme IX) to heme O by substitution of the vinyl group on carbon 2 of heme B porphyrin ring with a hydroxyethyl farnesyl side group. This chain is Protoheme IX farnesyltransferase, found in Sulfurisphaera tokodaii (strain DSM 16993 / JCM 10545 / NBRC 100140 / 7) (Sulfolobus tokodaii).